The sequence spans 134 residues: Citrolysin protein 2 (134 aa).

This chain is Citrolysin protein 2, found in Citrobacter freundii.